A 121-amino-acid polypeptide reads, in one-letter code: Large ribosomal subunit protein uL3 (121 aa).

Gln62 is modified (N5-methylglutamine).

The protein belongs to the universal ribosomal protein uL3 family. Part of the 50S ribosomal subunit. Forms a cluster with proteins L14 and L19. Post-translationally, methylated by PrmB.

Its function is as follows. One of the primary rRNA binding proteins, it binds directly near the 3'-end of the 23S rRNA, where it nucleates assembly of the 50S subunit. This chain is Large ribosomal subunit protein uL3 (rplC), found in Aggregatibacter actinomycetemcomitans (Actinobacillus actinomycetemcomitans).